A 235-amino-acid polypeptide reads, in one-letter code: Claudin-15 (235 aa).

A topological domain (cytoplasmic) is located at residue Met1. Residues 2–24 (LVAVEIFGFFLTAVGLLMLGVTL) form a helical membrane-spanning segment. The Extracellular segment spans residues 25–74 (AHSSWRVSTVHGNVITTNTIFENLWYSCATDSMGVHNCWEFPSMLALSGY). Cys52 and Cys62 form a disulfide bridge. A helical membrane pass occupies residues 75–99 (IQACRALMITAILLGFLGLFLGMVG). At 100-115 (LRCTNIGGLELSRKTK) the chain is on the cytoplasmic side. Ser111 bears the Phosphoserine mark. A helical membrane pass occupies residues 116–140 (LAATAGALHILAGICGMVAVSWYAF). At 141 to 159 (NITRDFFNPLYAGTKYELG) the chain is on the extracellular side. Residues 146 to 147 (FF) are important for the formation of tight-junction strand-like structures. Residues 160-182 (PALYLGWSACLLAILGGICLFSN) form a helical membrane-spanning segment. Over 183–235 (CCCSRDRDPATGVQLPYKAPVIPAASLAARLPAAASDEEGDSSFGKYGKNAYV) the chain is Cytoplasmic. A phosphoserine mark is found at Ser218 and Ser225.

It belongs to the claudin family. As to quaternary structure, can form homo- and heteropolymeric tight junction strands. Palmitoylated.

It is found in the cell junction. The protein resides in the tight junction. Its subcellular location is the cell membrane. It carries out the reaction Na(+)(in) = Na(+)(out). The catalysed reaction is K(+)(in) = K(+)(out). It catalyses the reaction Cs(+)(in) = Cs(+)(out). The enzyme catalyses Rb(+)(in) = Rb(+)(out). It carries out the reaction Li(+)(in) = Li(+)(out). The catalysed reaction is NH4(+)(in) = NH4(+)(out). It catalyses the reaction methylamine(out) = methylamine(in). The enzyme catalyses H2O(in) = H2O(out). In terms of biological role, forms paracellular channels: polymerizes in tight junction strands with cation- and water-selective channels through the strands, conveying epithelial permeability in a process known as paracellular tight junction permeability. In intestinal epithelium, allows for sodium and water fluxes from the peritoneal side to the lumen of the intestine to regulate nutrient absorption and intestinal morphogenesis. The chain is Claudin-15 (CLDN15) from Bos taurus (Bovine).